The sequence spans 557 residues: Intraflagellar transport protein 56 (557 aa).

The segment at 1–30 is disordered; sequence MLLSRMKPAVGGEASTSSNEKKRKNKSKKI. Residues 21 to 30 are compositionally biased toward basic residues; the sequence is KKRKNKSKKI. 4 TPR repeats span residues 60–93, 95–128, 154–187, and 471–504; these read EHAD…PDCP, DVWV…LQNR, TEDQ…NREF, and ANDC…EGKR.

The protein belongs to the IFT56 family. In terms of assembly, component of the IFT complex B.

The protein localises to the cell projection. Its subcellular location is the cilium. Its function is as follows. Component of the intraflagellar transport (IFT) complex B required for transport of proteins in the motile cilium. Required for transport of specific ciliary cargo proteins related to motility, while it is neither required for IFT complex B assembly or motion nor for cilium assembly. Plays a key role in maintaining the integrity of the IFT complex B and the proper ciliary localization of the IFT complex B components. Essential for maintaining proper microtubule organization within the ciliary axoneme. This Danio rerio (Zebrafish) protein is Intraflagellar transport protein 56.